The sequence spans 382 residues: MGIHGLAKLIADVAPAAIKEHDIKSYFGRKVAVDASMCIYQFLIAVRQDGNMLQNEDGETTSHLMGMFYRTIRMIEHGIKPVYVFDGKPPQMKSGELAKRSERRAEAEKLLEAAEEAGEVENIEKFNKRLVKVTKQHNEECKKLLTLMGVPYVDAPCEAEATCAALVKAGKVYAAATEDMDALTFGTPVLLRHLTASEAKKLPIQEFHLNRVMQDMGVSHEQFVDLCILLGSDYCETIRGIGPKRAIDLIRQHKSIEEIVDNIDLKKYPIPENWLHKEARQLFLEPEVVDTESTELKWIEPDEEGLVAFMCAEKQFSEDRIRNGAKKLAKNRQGSTQGRLDDFFKVTGSISSTKRKEVESKGSAKKKAKTAGTPAGKFKRGK.

The N-domain stretch occupies residues 1–104 (MGIHGLAKLI…GELAKRSERR (104 aa)). Residue aspartate 34 coordinates Mg(2+). 2 residues coordinate DNA: arginine 47 and arginine 70. Aspartate 86, glutamate 158, glutamate 160, aspartate 179, and aspartate 181 together coordinate Mg(2+). Positions 122–253 (NIEKFNKRLV…KRAIDLIRQH (132 aa)) are I-domain. Glutamate 158 contacts DNA. DNA-binding residues include glycine 231 and aspartate 233. A Mg(2+)-binding site is contributed by aspartate 233. The tract at residues 336-344 (TQGRLDDFF) is interaction with PCNA. Residues 352-382 (STKRKEVESKGSAKKKAKTAGTPAGKFKRGK) are disordered.

The protein belongs to the XPG/RAD2 endonuclease family. FEN1 subfamily. In terms of assembly, interacts with PCNA. Three molecules of fen1 bind to one PCNA trimer with each molecule binding to one PCNA monomer. PCNA stimulates the nuclease activity without altering cleavage specificity. The cofactor is Mg(2+). Phosphorylated. Phosphorylation upon DNA damage induces relocalization to the nuclear plasma.

It localises to the nucleus. The protein localises to the nucleolus. Its subcellular location is the nucleoplasm. The protein resides in the mitochondrion. Structure-specific nuclease with 5'-flap endonuclease and 5'-3' exonuclease activities involved in DNA replication and repair. During DNA replication, cleaves the 5'-overhanging flap structure that is generated by displacement synthesis when DNA polymerase encounters the 5'-end of a downstream Okazaki fragment. It enters the flap from the 5'-end and then tracks to cleave the flap base, leaving a nick for ligation. Also involved in the long patch base excision repair (LP-BER) pathway, by cleaving within the apurinic/apyrimidinic (AP) site-terminated flap. Acts as a genome stabilization factor that prevents flaps from equilibrating into structures that lead to duplications and deletions. Also possesses 5'-3' exonuclease activity on nicked or gapped double-stranded DNA, and exhibits RNase H activity. Also involved in replication and repair of rDNA and in repairing mitochondrial DNA. This Xenopus tropicalis (Western clawed frog) protein is Flap endonuclease 1 (fen1).